A 777-amino-acid polypeptide reads, in one-letter code: Lon protease (777 aa).

The Lon N-terminal domain occupies Ile11–Ile204. Residue Gly356–Thr363 coordinates ATP. Residues Leu592–Asn773 form the Lon proteolytic domain. Catalysis depends on residues Ser679 and Lys722.

Belongs to the peptidase S16 family. In terms of assembly, homohexamer. Organized in a ring with a central cavity.

It is found in the cytoplasm. It carries out the reaction Hydrolysis of proteins in presence of ATP.. ATP-dependent serine protease that mediates the selective degradation of mutant and abnormal proteins as well as certain short-lived regulatory proteins. Required for cellular homeostasis and for survival from DNA damage and developmental changes induced by stress. Degrades polypeptides processively to yield small peptide fragments that are 5 to 10 amino acids long. Binds to DNA in a double-stranded, site-specific manner. The sequence is that of Lon protease from Buchnera aphidicola subsp. Schizaphis graminum (strain Sg).